Consider the following 467-residue polypeptide: UDP-N-acetylmuramate--L-alanine ligase (467 aa).

114 to 120 (GTHGKTT) provides a ligand contact to ATP.

Belongs to the MurCDEF family.

Its subcellular location is the cytoplasm. It carries out the reaction UDP-N-acetyl-alpha-D-muramate + L-alanine + ATP = UDP-N-acetyl-alpha-D-muramoyl-L-alanine + ADP + phosphate + H(+). It participates in cell wall biogenesis; peptidoglycan biosynthesis. Its function is as follows. Cell wall formation. The sequence is that of UDP-N-acetylmuramate--L-alanine ligase from Rhodopseudomonas palustris (strain BisB18).